Reading from the N-terminus, the 104-residue chain is L-rhamnose mutarotase (104 aa).

Position 18 (tyrosine 18) interacts with substrate. Histidine 22 serves as the catalytic Proton donor. Substrate contacts are provided by residues tyrosine 41 and 76 to 77 (WW).

This sequence belongs to the rhamnose mutarotase family. Homodimer.

The protein localises to the cytoplasm. It carries out the reaction alpha-L-rhamnose = beta-L-rhamnose. It participates in carbohydrate metabolism; L-rhamnose metabolism. In terms of biological role, involved in the anomeric conversion of L-rhamnose. This is L-rhamnose mutarotase from Burkholderia ambifaria (strain MC40-6).